An 805-amino-acid polypeptide reads, in one-letter code: Leucine--tRNA ligase (805 aa).

Residues 40–51 carry the 'HIGH' region motif; it reads PYPSGSGLHVGH. The short motif at 576–580 is the 'KMSKS' region element; that stretch reads KMSKS. Lysine 579 is a binding site for ATP.

This sequence belongs to the class-I aminoacyl-tRNA synthetase family.

The protein localises to the cytoplasm. The enzyme catalyses tRNA(Leu) + L-leucine + ATP = L-leucyl-tRNA(Leu) + AMP + diphosphate. This Chlorobium phaeovibrioides (strain DSM 265 / 1930) (Prosthecochloris vibrioformis (strain DSM 265)) protein is Leucine--tRNA ligase.